We begin with the raw amino-acid sequence, 360 residues long: tRNA (guanine(9)-N1)-methyltransferase (360 aa).

The segment at 1–77 is disordered; sequence MENQDTEQSQ…RRKERIKEAE (77 aa). 2 stretches are compositionally biased toward basic and acidic residues: residues 8–24 and 33–55; these read QSQK…DFKR and MTKR…DEYK. Residues 56–67 are compositionally biased toward basic residues; that stretch reads QKKREKKKAARE. The segment covering 68–77 has biased composition (basic and acidic residues); sequence RRKERIKEAE. An SAM-dependent MTase TRM10-type domain is found at 94-293; that stretch reads RAKVAPQEQI…EVLPPRKVKG (200 aa). S-adenosyl-L-methionine contacts are provided by residues 199–200, Gly-219, 223–227, Cys-231, Leu-245, and 257–259; these read LT, DKNRY, and QVL. Asp-223 acts as the Proton acceptor in catalysis. The tract at residues 291-360 is disordered; it reads VKGKLTHGSD…SDEPSKGADH (70 aa). Residues 297 to 306 show a composition bias toward basic and acidic residues; that stretch reads HGSDPEKSIE. Low complexity predominate over residues 307–324; that stretch reads PSEVSEQPVSSEQSEQPV. The segment covering 328 to 343 has biased composition (polar residues); the sequence is QPVSSEQPVLSEQPVL.

This sequence belongs to the class IV-like SAM-binding methyltransferase superfamily. TRM10 family. As to quaternary structure, monomer.

The protein resides in the cytoplasm. It is found in the nucleus. It carries out the reaction guanosine(9) in tRNA + S-adenosyl-L-methionine = N(1)-methylguanosine(9) in tRNA + S-adenosyl-L-homocysteine + H(+). Its function is as follows. S-adenosyl-L-methionine-dependent guanine N(1)-methyltransferase that catalyzes the formation of N(1)-methylguanine at position 9 (m1G9) in cytoplasmic tRNA. The polypeptide is tRNA (guanine(9)-N1)-methyltransferase (Debaryomyces hansenii (strain ATCC 36239 / CBS 767 / BCRC 21394 / JCM 1990 / NBRC 0083 / IGC 2968) (Yeast)).